We begin with the raw amino-acid sequence, 96 residues long: Co-chaperonin GroES (96 aa).

This sequence belongs to the GroES chaperonin family. In terms of assembly, heptamer of 7 subunits arranged in a ring. Interacts with the chaperonin GroEL.

Its subcellular location is the cytoplasm. Functionally, together with the chaperonin GroEL, plays an essential role in assisting protein folding. The GroEL-GroES system forms a nano-cage that allows encapsulation of the non-native substrate proteins and provides a physical environment optimized to promote and accelerate protein folding. GroES binds to the apical surface of the GroEL ring, thereby capping the opening of the GroEL channel. This chain is Co-chaperonin GroES, found in Citrifermentans bemidjiense (strain ATCC BAA-1014 / DSM 16622 / JCM 12645 / Bem) (Geobacter bemidjiensis).